The chain runs to 277 residues: Small ribosomal subunit protein uS2 (277 aa).

2 stretches are compositionally biased toward basic and acidic residues: residues 227 to 256 and 267 to 277; these read QARAERQEAAAKEAAGDADKAPAEAERTEA and SEAKAEGNTEA. Positions 227–277 are disordered; that stretch reads QARAERQEAAAKEAAGDADKAPAEAERTEAPAEEAPAEAQSEAKAEGNTEA.

It belongs to the universal ribosomal protein uS2 family.

The polypeptide is Small ribosomal subunit protein uS2 (Corynebacterium jeikeium (strain K411)).